Here is a 664-residue protein sequence, read N- to C-terminus: MDYKFIVFNAARDNNLAQLKATLYNKSSVEVGSLISAKVNGATPLVISCRNGHYDIVEYLLTKCRANVEQVGSVSFDGEPIEDAPPLWCAAAAGHLGIVKMLVRRGANVNSTTRTNSTPLRAACFDGHYEIVKYLVHHGADFEVANRHGHTCLMIACYKGHFRIAQYLLSLNADVNRCSVKGNTALHDCAESGSLQILQLLLKHGATMDVDYYGMTPLLAASVTGHMPIVEHLITLPCVSRESRIHALELLGATYVDRKRDMAAALNLWRRALEERAVEPPLEKKVQEPVPAYEMVREVTSVEELEEMVLDPDEMRMQALVIRQRILGPTHPDTSYYIRFRGAHYADAGRFDRCIELWSYALTMQQKILQPLSPMTQSSLLSFAELFSFMLVEAGRLLPRGRVVPPIEPDSMLTIFYKAVKEVERGLAFTLEQQKDQQHPQKQLPAADKSPSCSASSSASSSSSTTLLSAHQHDCNHDPNALSRTMISAIHIGCLLSSLLDTDALSPEMRRQVMGALYRLNRLKVRVRFDRTALHYACYREGTLAGRYPSCQFPSVTLAKALLEVGADPNAIDEAGNTPLHLATMQPYVEPLSHILLEGGAHLDTKNYAGETFESLLAPTPMHKIIDPMKYTTLACLAARTIKKHDIRYEGTVPATLYEFIELH.

ANK repeat units follow at residues 40–70 (NGAT…NVEQ), 82–111 (EDAP…NVNS), 115–144 (TNST…DFEV), 148–177 (HGHT…DVNR), 181–210 (KGNT…TMDV), and 213–242 (YGMT…VSRE). 2 TPR repeats span residues 245–279 (IHAL…RAVE) and 335–368 (SYYI…QQKI). The tract at residues 433–460 (QQKDQQHPQKQLPAADKSPSCSASSSAS) is disordered. The span at 450 to 460 (SPSCSASSSAS) shows a compositional bias: low complexity. 2 ANK repeats span residues 529–571 (FDRT…DPNA) and 575–605 (AGNT…HLDT).

It belongs to the fem-1 family. Component of a CRL2 E3 ubiquitin-protein ligase complex, also named ECS (Elongin BC-CUL2/5-SOCS-box protein) complex.

It functions in the pathway protein modification; protein ubiquitination. Its function is as follows. Substrate-recognition component of a Cul2-RING (CRL2) E3 ubiquitin-protein ligase complex of the DesCEND (destruction via C-end degrons) pathway, which recognizes a C-degron located at the extreme C terminus of target proteins, leading to their ubiquitination and degradation. The C-degron recognized by the DesCEND pathway is usually a motif of less than ten residues and can be present in full-length proteins, truncated proteins or proteolytically cleaved forms. This is Protein fem-1 homolog CG6966 from Drosophila melanogaster (Fruit fly).